Here is an 863-residue protein sequence, read N- to C-terminus: Leucine--tRNA ligase (863 aa).

Positions 42 to 52 (PYPSGKIHMGH) match the 'HIGH' region motif. The short motif at 618 to 622 (KMSKS) is the 'KMSKS' region element. Lysine 621 is a binding site for ATP.

It belongs to the class-I aminoacyl-tRNA synthetase family.

It is found in the cytoplasm. The enzyme catalyses tRNA(Leu) + L-leucine + ATP = L-leucyl-tRNA(Leu) + AMP + diphosphate. The chain is Leucine--tRNA ligase from Desulforapulum autotrophicum (strain ATCC 43914 / DSM 3382 / VKM B-1955 / HRM2) (Desulfobacterium autotrophicum).